The chain runs to 359 residues: Heme A synthase (359 aa).

The next 6 membrane-spanning stretches (helical) occupy residues 23–43 (AVAFWLWSLAVLVFLMVVLGG), 85–105 (YAALFPDMDLAGFKFIFFFEW), 109–129 (LLGRLIGVATALPLLFFWLRG), 137–157 (LKLLGLLALGGLQGFVGWWMV), 172–192 (LAIHLILASLTFCFIVWLAAS), and 212–232 (AGLILLAILVQIGLGALVAGL). Histidine 276 is a heme binding site. 3 helical membrane-spanning segments follow: residues 278–298 (MVAYLVLGLTLLQVFWTSGTL), 308–328 (IALLGLVLAQVILGILTLVLV), and 329–349 (VPLWAGLLHQAFAMLVLGMAV). Heme is bound at residue histidine 337.

This sequence belongs to the COX15/CtaA family. Type 2 subfamily. In terms of assembly, interacts with CtaB. Requires heme b as cofactor.

The protein localises to the cell membrane. It catalyses the reaction Fe(II)-heme o + 2 A + H2O = Fe(II)-heme a + 2 AH2. Its pathway is porphyrin-containing compound metabolism; heme A biosynthesis; heme A from heme O: step 1/1. In terms of biological role, catalyzes the conversion of heme O to heme A by two successive hydroxylations of the methyl group at C8. The first hydroxylation forms heme I, the second hydroxylation results in an unstable dihydroxymethyl group, which spontaneously dehydrates, resulting in the formyl group of heme A. The protein is Heme A synthase of Beijerinckia indica subsp. indica (strain ATCC 9039 / DSM 1715 / NCIMB 8712).